Reading from the N-terminus, the 427-residue chain is MKVTKETLEKSRVELTIEVEAEEVSKAYEKAYKKIAQKVVIPGFRKGKAPRVLVERHVGKEYILEEALDELLPESYVKAVNEAGIEPVDKPEVSLVSYGVNEPLVYKAVVDVKPEVELGQYTGLEVTKMPVEVTDEEVEKELEYLQNRYAKLITVEDGEAKFGDIVVIDFAGKMNGEPLEGGSADNYRLELGSKVFIPGFEEQIVGMKPGETKEINVTFPEDYQKEDLAGKPAVFTVTLKEIKRKELAPLDDEFAKDVSEFSTLAELKEDLKKKIAQTKENISREKMEAEVVEKAVDNANVEIPASMVNHEVEHILHHFEEELKYRRLTLEQYLNYQKKTLDELKEELKPRAERNVKTELVLEAIAKKEGITATDEEIDKELGKIAELYQQPVEEIKKLFAQRMDDLAYSIVRRKTIDFLVENAKAV.

Residues 163–248 (GDIVVIDFAG…LKEIKRKELA (86 aa)) enclose the PPIase FKBP-type domain.

Belongs to the FKBP-type PPIase family. Tig subfamily.

It localises to the cytoplasm. The catalysed reaction is [protein]-peptidylproline (omega=180) = [protein]-peptidylproline (omega=0). In terms of biological role, involved in protein export. Acts as a chaperone by maintaining the newly synthesized protein in an open conformation. Functions as a peptidyl-prolyl cis-trans isomerase. This Carboxydothermus hydrogenoformans (strain ATCC BAA-161 / DSM 6008 / Z-2901) protein is Trigger factor.